The primary structure comprises 228 residues: tRNA (guanine-N(1)-)-methyltransferase (228 aa).

S-adenosyl-L-methionine is bound by residues Gly-111 and 130 to 135 (IGDFVL).

Belongs to the RNA methyltransferase TrmD family. In terms of assembly, homodimer.

It is found in the cytoplasm. It catalyses the reaction guanosine(37) in tRNA + S-adenosyl-L-methionine = N(1)-methylguanosine(37) in tRNA + S-adenosyl-L-homocysteine + H(+). Functionally, specifically methylates guanosine-37 in various tRNAs. The sequence is that of tRNA (guanine-N(1)-)-methyltransferase from Ureaplasma urealyticum serovar 10 (strain ATCC 33699 / Western).